An 887-amino-acid chain; its full sequence is Autotaxin (887 aa).

Positions 1–27 (MARQGCLGSFQVISLFTFAISVNICLG) are cleaved as a signal peptide. Positions 28 to 35 (FTASRIKR) are cleaved as a propeptide — removed by furin. Asparagine 53 is a glycosylation site (N-linked (GlcNAc...) asparagine). 2 SMB domains span residues 54-97 (TSGS…LKTA) and 98-142 (RGWE…GESH). Cystine bridges form between cysteine 58–cysteine 75, cysteine 62–cysteine 93, cysteine 73–cysteine 86, cysteine 79–cysteine 85, cysteine 102–cysteine 119, cysteine 107–cysteine 137, cysteine 117–cysteine 130, cysteine 123–cysteine 129, cysteine 148–cysteine 194, and cysteine 156–cysteine 350. The Cell attachment site motif lies at 126–128 (RGD). The phosphodiesterase stretch occupies residues 144 to 501 (VDDDCEEIKV…PTFKYRTKVP (358 aa)). The Zn(2+) site is built by aspartate 171 and threonine 209. Threonine 209 functions as the Nucleophile in the catalytic mechanism. Residues threonine 209, asparagine 230, and aspartate 311 each contribute to the 1-(9Z-octadecenoyl)-sn-glycero-3-phosphate site. Residues threonine 209, asparagine 230, and aspartate 311 each coordinate 1-hexadecanoyl-sn-glycero-3-phosphate. Residues threonine 209, asparagine 230, and aspartate 311 each contribute to the 1-tetradecanoyl-sn-glycerol 3-phosphate site. Zn(2+) is bound by residues aspartate 311, histidine 315, aspartate 358, and histidine 359. Cystine bridges form between cysteine 366–cysteine 468, cysteine 413–cysteine 830, cysteine 566–cysteine 691, cysteine 568–cysteine 676, and cysteine 799–cysteine 809. Residues asparagine 398 and asparagine 410 are each glycosylated (N-linked (GlcNAc...) asparagine). Histidine 474 lines the Zn(2+) pocket. Residue histidine 474 participates in 1-(9Z-octadecenoyl)-sn-glycero-3-phosphate binding. Histidine 474 provides a ligand contact to 1-hexadecanoyl-sn-glycero-3-phosphate. Histidine 474 contributes to the 1-tetradecanoyl-sn-glycerol 3-phosphate binding site. Residue asparagine 524 is glycosylated (N-linked (GlcNAc...) asparagine). Basic and acidic residues predominate over residues 586-607 (HTKGSTEAETGKFRGSKHENKK). A disordered region spans residues 586-615 (HTKGSTEAETGKFRGSKHENKKNLNGSVEP). An N-linked (GlcNAc...) asparagine glycan is attached at asparagine 610. The interval 622–887 (LYGRPAVLYR…TYLHTYESEI (266 aa)) is nuclease-like domain. Residues aspartate 764, asparagine 766, aspartate 768, leucine 770, and aspartate 772 each contribute to the Ca(2+) site. N-linked (GlcNAc...) asparagine glycosylation is present at asparagine 831. The required for secretion stretch occupies residues 854–875 (IEHLTGLDFYRKTSRSYSEILT).

The protein belongs to the nucleotide pyrophosphatase/phosphodiesterase family. It depends on Zn(2+) as a cofactor. The cofactor is Ca(2+). In terms of processing, N-glycosylation, but not furin-cleavage, plays a critical role on secretion and on lysoPLD activity. The interdomain disulfide bond between Cys-413 and Cys-830 is essential for catalytic activity. Abundantly expressed in cerebrum and cerebellum. Localized in secretory epithelial cells in the brain and the eye including choroid plexus epithelial cells, ciliary epithelial cells, iris pigment epithelial cells, and retinal pigment cells.

Its subcellular location is the secreted. It carries out the reaction a 1-O-alkyl-sn-glycero-3-phosphoethanolamine + H2O = a 1-O-alkyl-sn-glycero-3-phosphate + ethanolamine + H(+). The enzyme catalyses a 1-acyl-sn-glycero-3-phosphoethanolamine + H2O = a 1-acyl-sn-glycero-3-phosphate + ethanolamine + H(+). It catalyses the reaction 1-(9Z-octadecenoyl)-sn-glycero-3-phosphoethanolamine + H2O = 1-(9Z-octadecenoyl)-sn-glycero-3-phosphate + ethanolamine + H(+). The catalysed reaction is a 1-O-alkyl-sn-glycero-3-phosphocholine + H2O = a 1-O-alkyl-sn-glycero-3-phosphate + choline + H(+). It carries out the reaction 1-O-(9Z-octadecenyl)-sn-glycero-3-phosphocholine + H2O = 1-O-(9Z-octadecenyl)-sn-glycero-3-phosphate + choline + H(+). The enzyme catalyses 1-O-hexadecyl-sn-glycero-3-phosphocholine + H2O = 1-O-hexadecyl-sn-glycero-3-phosphate + choline + H(+). It catalyses the reaction a 1-O-(1Z-alkenyl)-sn-glycero-3-phosphocholine + H2O = a 1-O-(1Z-alkenyl)-sn-glycero-3-phosphate + choline + H(+). The catalysed reaction is a 1-acyl-sn-glycero-3-phosphocholine + H2O = a 1-acyl-sn-glycero-3-phosphate + choline + H(+). It carries out the reaction 1-dodecanoyl-sn-glycero-3-phosphocholine + H2O = 1-dodecanoyl-sn-glycerol 3-phosphate + choline + H(+). The enzyme catalyses 1-(9Z-octadecenoyl)-sn-glycero-3-phosphocholine + H2O = 1-(9Z-octadecenoyl)-sn-glycero-3-phosphate + choline + H(+). It catalyses the reaction 1-tetradecanoyl-sn-glycero-3-phosphocholine + H2O = 1-tetradecanoyl-sn-glycerol 3-phosphate + choline + H(+). The catalysed reaction is 1-decanoyl-sn-glycero-3-phosphocholine + H2O = 1-decanoyl-sn-glycero-3-phosphate + choline + H(+). It carries out the reaction 1-octadecanoyl-sn-glycero-3-phosphocholine + H2O = 1-octadecanoyl-sn-glycero-3-phosphate + choline + H(+). The enzyme catalyses 1-hexadecanoyl-sn-glycero-3-phosphocholine + H2O = 1-hexadecanoyl-sn-glycero-3-phosphate + choline + H(+). It catalyses the reaction 1-hexanoyl-sn-glycero-3-phosphocholine + H2O = 1-hexanoyl-sn-glycero-3-phosphate + choline + H(+). The catalysed reaction is 1-(9Z,12Z)-octadecadienoyl-sn-glycero-3-phosphocholine + H2O = 1-(9Z,12Z)-octadecadienoyl-sn-glycero-3-phosphate + choline + H(+). It carries out the reaction sphing-4-enine-phosphocholine + H2O = sphing-4-enine 1-phosphate + choline + H(+). The enzyme catalyses 1-(5Z,8Z,11Z,14Z-eicosatetraenoyl)-sn-glycero-3-phosphocholine + H2O = 1-(5Z,8Z,11Z,14Z-eicosatetraenoyl)-sn-glycero-3-phosphate + choline + H(+). It catalyses the reaction a 2-acyl-sn-glycero-3-phosphocholine + H2O = a 2-acyl-sn-glycerol 3-phosphate + choline + H(+). The catalysed reaction is a 1,2-diacyl-sn-glycero-3-phosphocholine + H2O = a 1,2-diacyl-sn-glycero-3-phosphate + choline + H(+). It carries out the reaction 1,2-dioctanoyl-sn-glycero-3-phosphocholine + H2O = 1,2-dioctanoyl-sn-glycero-3-phosphate + choline + H(+). The enzyme catalyses 1,2-didecanoyl-sn-glycero-3-phosphocholine + H2O = 1,2-didecanoyl-sn-glycero-3-phosphate + choline + H(+). It catalyses the reaction a 1-acyl-sn-glycero-3-phospho-L-serine + H2O = a 1-acyl-sn-glycero-3-phosphate + L-serine + H(+). The catalysed reaction is 1-(9Z-octadecenoyl)-sn-glycero-3-phospho-L-serine + H2O = 1-(9Z-octadecenoyl)-sn-glycero-3-phosphate + L-serine + H(+). It carries out the reaction a 2-acyl-sn-glycero-3-phospho-L-serine + H2O = a 2-acyl-sn-glycerol 3-phosphate + L-serine + H(+). Its activity is regulated as follows. Inhibited by vanadate. Inhibited by micromolar levels of bile salts, such as tauroursodeoxycholate. Not inhibited by taurodeoxycholate. Not inhibited by hydroxysterols, such as 7-hydroxycholesterol, testosterone, dexamethasone and prednisolone. Inhibited by EDTA and EGTA. Its function is as follows. Secreted lysophospholipase D that hydrolyzes lysophospholipids to produce the signaling molecule lysophosphatidic acid (LPA) in extracellular fluids. Its major substrate is lysophosphatidylcholine. Can also act on sphingosylphosphorylcholine producing sphingosine-1-phosphate, a modulator of cell motility. Can hydrolyze, in vitro, bis-pNPP, to some extent pNP-TMP, and barely ATP. Involved in several motility-related processes such as angiogenesis and neurite outgrowth. Acts as an angiogenic factor by stimulating migration of smooth muscle cells and microtubule formation. Stimulates migration of melanoma cells, probably via a pertussis toxin-sensitive G protein. May have a role in induction of parturition. Possible involvement in cell proliferation and adipose tissue development. Required for LPA production in activated platelets, cleaves the sn-1 lysophospholipids to generate sn-1 lysophosphatidic acids containing predominantly 18:2 and 20:4 fatty acids. Shows a preference for the sn-1 to the sn-2 isomer of 1-O-alkyl-sn-glycero-3-phosphocholine (lyso-PAF). This chain is Autotaxin, found in Rattus norvegicus (Rat).